Here is a 347-residue protein sequence, read N- to C-terminus: NADH-ubiquinone oxidoreductase chain 2 (347 aa).

Transmembrane regions (helical) follow at residues 5–22 (ILTI…MVLI), 26–45 (WLTV…PILM), 60–80 (FLTQ…NLLL), 150–170 (NPNL…WGGL), 178–198 (ILAY…TYNP), 200–220 (LMML…MLFM), 242–262 (SLIL…GFIP), 274–294 (NMII…YFYM), and 324–344 (TLLP…PMML).

It belongs to the complex I subunit 2 family. Core subunit of respiratory chain NADH dehydrogenase (Complex I) which is composed of 45 different subunits. Interacts with TMEM242.

The protein localises to the mitochondrion inner membrane. The enzyme catalyses a ubiquinone + NADH + 5 H(+)(in) = a ubiquinol + NAD(+) + 4 H(+)(out). In terms of biological role, core subunit of the mitochondrial membrane respiratory chain NADH dehydrogenase (Complex I) which catalyzes electron transfer from NADH through the respiratory chain, using ubiquinone as an electron acceptor. Essential for the catalytic activity and assembly of complex I. The protein is NADH-ubiquinone oxidoreductase chain 2 of Martes flavigula (Yellow-throated marten).